The sequence spans 770 residues: Endothelin-converting enzyme 1 (770 aa).

The Cytoplasmic portion of the chain corresponds to 1-68 (MRGVWPPPVS…WAARTQVEKR (68 aa)). Thr-25 bears the Phosphothreonine mark. Residues 69 to 89 (LVVLVVLLAAGLVACLAALGI) form a helical; Signal-anchor for type II membrane protein membrane-spanning segment. Residues 90-770 (QYQTRSPSVC…MNPPHKCEVW (681 aa)) are Extracellular-facing. One can recognise a Peptidase M13 domain in the interval 98-770 (VCLSEACVSV…MNPPHKCEVW (673 aa)). Intrachain disulfides connect Cys-99-Cys-104, Cys-122-Cys-755, Cys-130-Cys-715, Cys-185-Cys-435, and Cys-644-Cys-767. N-linked (GlcNAc...) asparagine glycans are attached at residues Asn-166, Asn-187, Asn-210, Asn-270, Asn-316, Asn-362, Asn-383, and Asn-539. His-607 serves as a coordination point for Zn(2+). Glu-608 is a catalytic residue. Residue His-611 participates in Zn(2+) binding. Asn-632 and Asn-651 each carry an N-linked (GlcNAc...) asparagine glycan. Position 667 (Glu-667) interacts with Zn(2+). The active-site Proton donor is Asp-671.

It belongs to the peptidase M13 family. Homodimer; disulfide-linked. Interacts with PPP1R16B. Interacts with TSPAN8; this interaction recruits the endothelin converting enzyme ECE1 to tetraspanin-enriched microdomains and positively modulates its enzymatic activity. Zn(2+) serves as cofactor. All isoforms are expressed in umbilical vein endothelial cells, polynuclear neutrophils, fibroblasts, atrium cardiomyocytes and ventricles. Isoforms A, B and C are also expressed in placenta, lung, heart, adrenal gland and phaeochromocytoma; isoforms A and C in liver, testis and small intestine; isoform B, C and D in endothelial cells and umbilical vein smooth muscle cells; isoforms C and D in saphenous vein cells, and isoform C in kidney.

The protein resides in the cell membrane. The catalysed reaction is Hydrolysis of the 21-Trp-|-Val-22 bond in big endothelin to form endothelin 1.. Inhibited by phosphoramidon. Activated by K49-P1-20, a twenty-residue synthetic peptide shortened from the snake B.asper myotoxin II. Functionally, converts big endothelin-1 to endothelin-1. The protein is Endothelin-converting enzyme 1 (ECE1) of Homo sapiens (Human).